Reading from the N-terminus, the 418-residue chain is Voltage-gated ClC-type chloride channel ClcB (418 aa).

The next 10 membrane-spanning stretches (helical) occupy residues 5-25, 54-74, 146-166, 168-188, 222-242, 258-278, 291-311, 316-336, 352-372, and 380-400; these read LLIA…FRHA, LLTP…WQKF, LWIA…PLAG, LFIA…PVII, ALII…LTLM, WQLA…PAVW, APPL…AVLA, GAPG…GMLY, LLLG…APIM, and MTGE…ASVI.

It belongs to the chloride channel (TC 2.A.49) family. ClcB subfamily.

Its subcellular location is the cell inner membrane. In terms of biological role, probably acts as an electrical shunt for an outwardly-directed proton pump that is linked to amino acid decarboxylation, as part of the extreme acid resistance (XAR) response. This Escherichia coli (strain ATCC 8739 / DSM 1576 / NBRC 3972 / NCIMB 8545 / WDCM 00012 / Crooks) protein is Voltage-gated ClC-type chloride channel ClcB.